Here is a 256-residue protein sequence, read N- to C-terminus: Imidazole glycerol phosphate synthase subunit HisF (256 aa).

Active-site residues include aspartate 12 and aspartate 131.

The protein belongs to the HisA/HisF family. As to quaternary structure, heterodimer of HisH and HisF.

The protein resides in the cytoplasm. It carries out the reaction 5-[(5-phospho-1-deoxy-D-ribulos-1-ylimino)methylamino]-1-(5-phospho-beta-D-ribosyl)imidazole-4-carboxamide + L-glutamine = D-erythro-1-(imidazol-4-yl)glycerol 3-phosphate + 5-amino-1-(5-phospho-beta-D-ribosyl)imidazole-4-carboxamide + L-glutamate + H(+). It participates in amino-acid biosynthesis; L-histidine biosynthesis; L-histidine from 5-phospho-alpha-D-ribose 1-diphosphate: step 5/9. Functionally, IGPS catalyzes the conversion of PRFAR and glutamine to IGP, AICAR and glutamate. The HisF subunit catalyzes the cyclization activity that produces IGP and AICAR from PRFAR using the ammonia provided by the HisH subunit. The polypeptide is Imidazole glycerol phosphate synthase subunit HisF (Pseudomonas syringae pv. syringae (strain B728a)).